The primary structure comprises 118 residues: MKIVALTLVAFVALAGASCPYAAPAPAYSAPAAPSGYPAPPCPTNYLFSCQPNLAPAPCAQEAQAPAYGSAGAYTEQVPHYVGSPNREQVQQFHQRIGMAALMEELRGLGQGIQGQQY.

An N-terminal signal peptide occupies residues 1–17 (MKIVALTLVAFVALAGA). One can recognise a VM domain in the interval 36–75 (GYPAPPCPTNYLFSCQPNLAPAPCAQEAQAPAYGSAGAYT).

The protein belongs to the vitelline membrane family.

Its subcellular location is the secreted. Major early eggshell protein. This chain is Vitelline membrane protein Vm32E, found in Drosophila mauritiana (Fruit fly).